Consider the following 316-residue polypeptide: Arginine transport system permease protein ArgU (316 aa).

The segment covering 1 to 14 (MSDLNQGPGASTAQ) has biased composition (polar residues). Positions 1–20 (MSDLNQGPGASTAQPKPIEA) are disordered. The next 6 membrane-spanning stretches (helical) occupy residues 29–49 (WVAA…ALNN), 74–94 (IALT…LAVM), 108–128 (LYLW…WGLL), 151–171 (MFLL…AEIV), 217–237 (LISM…LELY), and 251–271 (VPML…LMVG). Positions 70-274 (ALHTIALTLL…TSILMVGQYY (205 aa)) constitute an ABC transmembrane type-1 domain.

It belongs to the binding-protein-dependent transport system permease family. The complex is probably composed of two ATP-binding proteins (ArgV), two transmembrane proteins (ArgU) and a solute-binding protein (ArgT).

It is found in the cell membrane. Part of the ABC transporter complex ArgTUV involved in L-arginine import. May also transport L-citrulline. Probably responsible for the translocation of the substrate across the membrane. This is Arginine transport system permease protein ArgU from Corynebacterium glutamicum (strain ATCC 13032 / DSM 20300 / JCM 1318 / BCRC 11384 / CCUG 27702 / LMG 3730 / NBRC 12168 / NCIMB 10025 / NRRL B-2784 / 534).